Here is a 223-residue protein sequence, read N- to C-terminus: Large ribosomal subunit protein bL25 (223 aa).

This sequence belongs to the bacterial ribosomal protein bL25 family. CTC subfamily. In terms of assembly, part of the 50S ribosomal subunit; part of the 5S rRNA/L5/L18/L25 subcomplex. Contacts the 5S rRNA. Binds to the 5S rRNA independently of L5 and L18.

Its function is as follows. This is one of the proteins that binds to the 5S RNA in the ribosome where it forms part of the central protuberance. The polypeptide is Large ribosomal subunit protein bL25 (Albidiferax ferrireducens (strain ATCC BAA-621 / DSM 15236 / T118) (Rhodoferax ferrireducens)).